The sequence spans 293 residues: 4-diphosphocytidyl-2-C-methyl-D-erythritol kinase (293 aa).

K10 is a catalytic residue. 94–104 (PVSAGLAGGSS) contributes to the ATP binding site. Residue D136 is part of the active site.

It belongs to the GHMP kinase family. IspE subfamily.

It catalyses the reaction 4-CDP-2-C-methyl-D-erythritol + ATP = 4-CDP-2-C-methyl-D-erythritol 2-phosphate + ADP + H(+). Its pathway is isoprenoid biosynthesis; isopentenyl diphosphate biosynthesis via DXP pathway; isopentenyl diphosphate from 1-deoxy-D-xylulose 5-phosphate: step 3/6. Catalyzes the phosphorylation of the position 2 hydroxy group of 4-diphosphocytidyl-2C-methyl-D-erythritol. This is 4-diphosphocytidyl-2-C-methyl-D-erythritol kinase from Listeria monocytogenes serovar 1/2a (strain ATCC BAA-679 / EGD-e).